The chain runs to 229 residues: Peroxiredoxin-like 2A (229 aa).

The segment at 14 to 112 (MWSIGVGAFG…DELGVPLYAV (99 aa)) is thioredoxin fold. Active-site redox-active residues include cysteine 85 and cysteine 88.

This sequence belongs to the peroxiredoxin-like PRXL2 family. PRXL2A subfamily. Expressed by the principal cells of the epididymis. Detected in the head region of epididymal sperm (at protein level). Expressed in bone marrow.

It localises to the cytoplasm. The protein localises to the secreted. Functionally, involved in redox regulation of the cell. Acts as an antioxidant. Inhibits TNFSF11-induced NFKB1 and JUN activation and osteoclast differentiation. May affect bone resorption and help to maintain bone mass. Acts as a negative regulator of macrophage-mediated inflammation by inhibiting macrophage production of inflammatory cytokines, probably through suppression of the MAPK signaling pathway. This chain is Peroxiredoxin-like 2A, found in Rattus norvegicus (Rat).